A 1630-amino-acid chain; its full sequence is MGSMRKMSSSFKRGSIKSSTSGSQKGQKAWIEKTFCKRECIFVIPSTKDPNRCCCGQLTNQHIPPLPSVTPSSTAEDTKQGDAQSGKWSVSKHTQSYPTDSYGILEFQGGGYSNKAMYIRVSYDTKPDSLLHLMVKDWQLELPKLLISVHGGLQSFEMQPKLKQVFGKGLIKAAMTTGAWIFTGGVSTGKSVVSHVGDALKDHSSKSRGRLCAIGIAPWGMVENKEDLVGKDVTRVYQTMSNPLSKLSVLNNSHTHFILADNGTLGKYGAEVKLRRQLEKHISLQKINTRLGQGVPVVGLVVEGGPNVVSIVLEYLREDPPVPVVVCDGSGRASDILSFAHKYCDEGGVINESLRDQLLVTIQKTFNYSKSQSHQLFAIIMECMKKKELVTVFRMGSEGQQDVEMAILTALLKGTNVSAPDQLSLALAWNRVDIARSQIFVFGPHWPPLGSLAPPVDTKVAEKEKKPPTATTKGRGKGKGKKKGKVKEEVEEETDPRKIELLNWVNALEQAMLDALVLDRVDFVKLLIENGVNMQHFLTIPRLEELYNTRLGPPNTLHLLVRDVKKSNLPPDYHISLIDIGLVLEYLMGGAYRCNYTRKSFRTLYNNLFGPKRPKALKLLGMEDDEPPAKGKKKKKKKKEEEIDIDVDDPAVSRFQYPFHELMVWAVLMKRQKMAVFLWQRGEECMAKALVACKLYKAMAHESSESELVDDISQDLDNNSKDFGQLAVELLDQSYKHDEQVAMKLLTYELKNWSNSTCLKLAVAAKHRDFIAHTCSQMLLTDMWMGRLRMRKNPGLKVIMGILIPPTILFLEFRSYDDFSYQTSKENEDGKEKEEENVDANADAGSRKGDEENEHKKQRSIPIGTKICEFYNAPIVKFWFYTISYLGYLLLFNYVILVRMDGWPSPQEWIVISYIVSLALEKIREILMSEPGKLSQKIKVWLQEYWNITDLVAISMFMVGAILRLQNQPYMGYGRVIYCVDIILWYIRVLDIFGVNKYLGPYVMMIGKMMIDMLYFVVIMLVVLMSFGVARQAILHPEEKPSWKLARNIFYMPYWMIYGEVFADQIDRKTRIHIYAMEINPPCGENLYDEEGKRLPPCIPGAWLTPALMACYLLVANILLVNLLIAVFNNTFFEVKSISNQVWKFQRYQLIMTFHDRPVLPPPMIILSHIYIIVMRLSGRCRKKREGDQEERDRGLKLFLSDEELKKLHEFEEQCVQEHFREKEDEQQSSSDERIRVTSERVENMSMRLEEINERENFMKASLQTVDLRLSQLEELSGRMVGALENLAGIDRSDLIQARSRASSECEATYLLRQSSINSADGYSMYRYHFNGEELLFEEPALSTSPGTVFRKKTCSFRVKEEDVKSHLDQPSSLHHTPGPSPPATPGRSRLALDGPLSTELRPGLDPGISAGELDPRADFKSAEVAPSLNTANVASTQLTVESTVSHPLRESKLARYYPGDLNTYKTMKSRSFVYSEGRKLVRGLSNWGAEYSSIMDQTWNSAEWRCQVQRITRSRSTDIPYIVSEAASQDEFEDEHRESLLAPQISRSALTVSDRPEKENLLSVKPHQTLGFPCLRSRSLHGHPRSAKPSPSKLDRAGHASSTSNLAVMSDAPEGQNTQQEKGNPETEC.

Disordered regions lie at residues 1–25 (MGSM…GSQK), 65–92 (PLPS…SVSK), 453–492 (APPV…EVEE), 620–643 (LGME…EEEI), and 824–858 (SKEN…HKKQ). The Cytoplasmic portion of the chain corresponds to 1-877 (MGSMRKMSSS…CEFYNAPIVK (877 aa)). A compositionally biased stretch (low complexity) spans 8–25 (SSSFKRGSIKSSTSGSQK). Positions 69–92 (VTPSSTAEDTKQGDAQSGKWSVSK) are enriched in polar residues. A compositionally biased stretch (basic residues) spans 474 to 485 (GRGKGKGKKKGK). Composition is skewed to basic and acidic residues over residues 825–834 (KENEDGKEKE) and 845–855 (GSRKGDEENEH). A helical membrane pass occupies residues 878 to 898 (FWFYTISYLGYLLLFNYVILV). The Extracellular segment spans residues 899-944 (RMDGWPSPQEWIVISYIVSLALEKIREILMSEPGKLSQKIKVWLQE). A helical membrane pass occupies residues 945–965 (YWNITDLVAISMFMVGAILRL). Residues 966–975 (QNQPYMGYGR) lie on the Cytoplasmic side of the membrane. Residues 976-996 (VIYCVDIILWYIRVLDIFGVN) form a helical membrane-spanning segment. The Extracellular portion of the chain corresponds to 997–1008 (KYLGPYVMMIGK). Residues 1009–1029 (MMIDMLYFVVIMLVVLMSFGV) traverse the membrane as a helical segment. At 1030–1107 (ARQAILHPEE…CIPGAWLTPA (78 aa)) the chain is on the cytoplasmic side. A helical membrane pass occupies residues 1108-1128 (LMACYLLVANILLVNLLIAVF). Asn1129 carries N-linked (GlcNAc...) asparagine glycosylation. Residues 1129–1158 (NNTFFEVKSISNQVWKFQRYQLIMTFHDRP) are Extracellular-facing. A helical membrane pass occupies residues 1159 to 1179 (VLPPPMIILSHIYIIVMRLSG). At 1180 to 1630 (RCRKKREGDQ…QEKGNPETEC (451 aa)) the chain is on the cytoplasmic side. Residues 1235–1255 (IRVTSERVENMSMRLEEINER) are a coiled coil. 2 disordered regions span residues 1362-1414 (EDVK…AGEL) and 1575-1630 (CLRS…ETEC).

Belongs to the transient receptor (TC 1.A.4) family. LTrpC subfamily. TRPM1 sub-subfamily. Interacts with TRPM3; the interaction results in the formation of a heteromultimeric cation channel complex that are functionally different from the homomeric channels. Interacts with GPR179. Associates with both guanine nucleotide-binding proteins G(o) and beta-gamma G protein dimer; implicated in directly regulating TRPM1 channel open-state.

Its subcellular location is the cell membrane. The protein localises to the endoplasmic reticulum membrane. It localises to the cell projection. It is found in the axon. The catalysed reaction is Ca(2+)(in) = Ca(2+)(out). The enzyme catalyses Mg(2+)(in) = Mg(2+)(out). It catalyses the reaction Mn(2+)(in) = Mn(2+)(out). It carries out the reaction Ni(2+)(in) = Ni(2+)(out). Inhibited by extracellular zinc ions. Inhibited by intracellular Mg(2+). Activated by the neuroactive steroid pregnenolone sulfate. Negatively regulated by activation of GRM6 receptors in the ON-bipolar cells. Constitutively open nonselective divalent cation-conducting channels which mediate the influx of Ca(2+), Mg(2+), Mn(2+), Ba(2+), and Ni(2+) into the cytoplasm, leading to membrane depolarization. Impermeable to zinc ions. In addition, forms heteromultimeric ion channels with TRPM3 which are permeable for calcium and zinc ions. Plays an essential role for the depolarizing photoresponse of retinal ON bipolar cells. In the dark, tonic release of glutamate activates the G-protein coupled receptor for glutamate GRM6, its activation induces the release of G(o) protein and the beta-gamma G protein dimer. Both subunits can interact and inactivate the TRPM1 channel. A light onset, induces decrease in glutamate release and deactivation of GRM6 leading to channel opening and membrane depolarization. May play a role in metastasis suppression. This Rattus norvegicus (Rat) protein is Transient receptor potential cation channel subfamily M member 1.